The primary structure comprises 507 residues: Probable DNA ligase (507 aa).

Glutamate 209 provides a ligand contact to ATP. Lysine 211 acts as the N6-AMP-lysine intermediate in catalysis. 6 residues coordinate ATP: arginine 216, arginine 231, glutamate 260, phenylalanine 300, arginine 372, and lysine 378.

This sequence belongs to the ATP-dependent DNA ligase family. Mg(2+) serves as cofactor.

It catalyses the reaction ATP + (deoxyribonucleotide)n-3'-hydroxyl + 5'-phospho-(deoxyribonucleotide)m = (deoxyribonucleotide)n+m + AMP + diphosphate.. Its function is as follows. DNA ligase that seals nicks in double-stranded DNA during DNA replication, DNA recombination and DNA repair. This is Probable DNA ligase from Mycobacterium bovis (strain ATCC BAA-935 / AF2122/97).